Consider the following 224-residue polypeptide: UPF0111 protein TC_0063 (224 aa).

Belongs to the UPF0111 family.

The polypeptide is UPF0111 protein TC_0063 (Chlamydia muridarum (strain MoPn / Nigg)).